Here is a 213-residue protein sequence, read N- to C-terminus: Charged multivesicular body protein 2b (213 aa).

The residue at position 2 (A2) is an N-acetylalanine. Residues 25–55 are a coiled coil; the sequence is QRAIIRDRAALEKQEKQLELEIKKMAKIGNK. Residues 179 to 194 show a composition bias toward low complexity; the sequence is AKAPSAARSLPSASTS. Residues 179-199 are disordered; that stretch reads AKAPSAARSLPSASTSKATIS. Phosphoserine is present on S199. Residues 201–211 carry the MIT-interacting motif motif; it reads EEIERQLKALG.

This sequence belongs to the SNF7 family. Probable core component of the endosomal sorting required for transport complex III (ESCRT-III). ESCRT-III components are thought to multimerize to form a flat lattice on the perimeter membrane of the endosome. Several assembly forms of ESCRT-III may exist that interact and act sequentially. Interacts with CHMP2A. Interacts with VPS4A. Interacts with VPS4B; the interaction is direct. Widely expressed. Expressed in brain, heart, skeletal muscle, spleen, kidney, liver, small intestine, pancreas, lung, placenta and leukocytes. In brain, it is expressed in cerebellum, cerebral cortex, medulla, spinal cord, occipital lobe, frontal lobe, temporal lobe and putamen.

It is found in the cytoplasm. The protein localises to the cytosol. It localises to the late endosome membrane. Probable core component of the endosomal sorting required for transport complex III (ESCRT-III) which is involved in multivesicular bodies (MVBs) formation and sorting of endosomal cargo proteins into MVBs. MVBs contain intraluminal vesicles (ILVs) that are generated by invagination and scission from the limiting membrane of the endosome and mostly are delivered to lysosomes enabling degradation of membrane proteins, such as stimulated growth factor receptors, lysosomal enzymes and lipids. The MVB pathway appears to require the sequential function of ESCRT-O, -I,-II and -III complexes. ESCRT-III proteins mostly dissociate from the invaginating membrane before the ILV is released. The ESCRT machinery also functions in topologically equivalent membrane fission events, such as the terminal stages of cytokinesis and the budding of enveloped viruses (HIV-1 and other lentiviruses). ESCRT-III proteins are believed to mediate the necessary vesicle extrusion and/or membrane fission activities, possibly in conjunction with the AAA ATPase VPS4. This Homo sapiens (Human) protein is Charged multivesicular body protein 2b (CHMP2B).